Reading from the N-terminus, the 108-residue chain is Iron-sulfur cluster assembly protein CyaY (108 aa).

This sequence belongs to the frataxin family.

In terms of biological role, involved in iron-sulfur (Fe-S) cluster assembly. May act as a regulator of Fe-S biogenesis. The protein is Iron-sulfur cluster assembly protein CyaY of Pseudomonas paraeruginosa (strain DSM 24068 / PA7) (Pseudomonas aeruginosa (strain PA7)).